Here is a 274-residue protein sequence, read N- to C-terminus: Undecaprenyl-diphosphatase (274 aa).

The next 8 membrane-spanning stretches (helical) occupy residues 1-21 (MDWLYSLIYGIVEGITEFLPI), 42-62 (VKDTFEVVIQGGAILAVLVYY), 81-101 (LWLGVVLACIPAVILGVLFGD), 107-127 (LFRPSVVAWALIVGGVLMWLL), 142-162 (ISAGKALAIGAAQCLALLWPG), 184-204 (TKFSFYLGVPTLGGAALLDFI), 213-233 (IGVVNVAIGAVTSFVVAYFAI), and 248-268 (FAVYRVVVGVLILVLIARGVL).

This sequence belongs to the UppP family.

Its subcellular location is the cell membrane. It carries out the reaction di-trans,octa-cis-undecaprenyl diphosphate + H2O = di-trans,octa-cis-undecaprenyl phosphate + phosphate + H(+). Functionally, catalyzes the dephosphorylation of undecaprenyl diphosphate (UPP). Confers resistance to bacitracin. The sequence is that of Undecaprenyl-diphosphatase from Deinococcus radiodurans (strain ATCC 13939 / DSM 20539 / JCM 16871 / CCUG 27074 / LMG 4051 / NBRC 15346 / NCIMB 9279 / VKM B-1422 / R1).